Here is a 105-residue protein sequence, read N- to C-terminus: Flagellar transcriptional regulator FlhD (105 aa).

Belongs to the FlhD family. As to quaternary structure, homodimer; disulfide-linked. Forms a heterohexamer composed of two FlhC and four FlhD subunits. Each FlhC binds a FlhD dimer, forming a heterotrimer, and a hexamer assembles by dimerization of two heterotrimers.

Its subcellular location is the cytoplasm. Functions in complex with FlhC as a master transcriptional regulator that regulates transcription of several flagellar and non-flagellar operons by binding to their promoter region. Activates expression of class 2 flagellar genes, including fliA, which is a flagellum-specific sigma factor that turns on the class 3 genes. Also regulates genes whose products function in a variety of physiological pathways. The polypeptide is Flagellar transcriptional regulator FlhD (Cupriavidus pinatubonensis (strain JMP 134 / LMG 1197) (Cupriavidus necator (strain JMP 134))).